A 336-amino-acid chain; its full sequence is MLALGKLLELTLAGREPAEKTQLTVEGVRMRWLSEGALEVRPPEARDNGLDLLLSAGIHGNETAPIELLDRLLHDIARGDLKPRARILFLFGNPEAIRKGERFVEQDVNRLFNGRHEQSSGSEALRACELERLAASFFSLPDRQRLHYDLHTAIRGSKIEQFALYPWKEGRQHSRLELARLRAAGMEAVLLQNKPSIVFSSYTYDKLGAESFTLELGKARPFGQNAGVNVSLLETRLKQIIEGTEPEMAEQGLDGLQLFSVAREIIKHSDAFRLNLPADIENFSELDVGYVLAEDLANTRWIIEEQGARIIFPNPKVKNGLRAGILIVPTTDENLA.

Zn(2+) contacts are provided by His59, Glu62, and His151. Glu215 is an active-site residue.

Belongs to the AspA/AstE family. Succinylglutamate desuccinylase subfamily. The cofactor is Zn(2+).

It catalyses the reaction N-succinyl-L-glutamate + H2O = L-glutamate + succinate. It participates in amino-acid degradation; L-arginine degradation via AST pathway; L-glutamate and succinate from L-arginine: step 5/5. Functionally, transforms N(2)-succinylglutamate into succinate and glutamate. The polypeptide is Succinylglutamate desuccinylase (Pseudomonas fluorescens (strain Pf0-1)).